The sequence spans 204 residues: Holliday junction branch migration complex subunit RuvA (204 aa).

Residues 1–64 (MIGRLQGKLI…EDAHLLFGFS (64 aa)) are domain I. Residues 65-143 (TKTDRTLFRE…GLRQPDFFVE (79 aa)) form a domain II region. The segment at 144 to 155 (SKHITVPDIVSA) is flexible linker. Residues 156–204 (EKETPNDEAVAALVALGYKPPEAAKMVKKVANGDLTSEQLIREALKAAL) form a domain III region.

The protein belongs to the RuvA family. As to quaternary structure, homotetramer. Forms an RuvA(8)-RuvB(12)-Holliday junction (HJ) complex. HJ DNA is sandwiched between 2 RuvA tetramers; dsDNA enters through RuvA and exits via RuvB. An RuvB hexamer assembles on each DNA strand where it exits the tetramer. Each RuvB hexamer is contacted by two RuvA subunits (via domain III) on 2 adjacent RuvB subunits; this complex drives branch migration. In the full resolvosome a probable DNA-RuvA(4)-RuvB(12)-RuvC(2) complex forms which resolves the HJ.

The protein resides in the cytoplasm. Functionally, the RuvA-RuvB-RuvC complex processes Holliday junction (HJ) DNA during genetic recombination and DNA repair, while the RuvA-RuvB complex plays an important role in the rescue of blocked DNA replication forks via replication fork reversal (RFR). RuvA specifically binds to HJ cruciform DNA, conferring on it an open structure. The RuvB hexamer acts as an ATP-dependent pump, pulling dsDNA into and through the RuvAB complex. HJ branch migration allows RuvC to scan DNA until it finds its consensus sequence, where it cleaves and resolves the cruciform DNA. The protein is Holliday junction branch migration complex subunit RuvA of Actinobacillus succinogenes (strain ATCC 55618 / DSM 22257 / CCUG 43843 / 130Z).